We begin with the raw amino-acid sequence, 1059 residues long: Zinc finger protein 865 (1059 aa).

Disordered regions lie at residues 1-24 (MEAN…EDGV), 58-142 (LPCA…DAAF), and 161-206 (NLKR…CDPT). The span at 8–21 (SGAGGGGSSGIGGE) shows a compositional bias: gly residues. Pro residues predominate over residues 61–78 (APGPPPQPPPQPPPPQYD). Residues 93–119 (SSSSSSSSSSSSSSSSSSSSSSSSSQA) are compositionally biased toward low complexity. 2 stretches are compositionally biased toward pro residues: residues 124–137 (PPLP…PPPL) and 183–198 (APGP…PGPP). 2 C2H2-type zinc fingers span residues 224 to 246 (FPCG…MLVH) and 252 to 274 (YECG…RRCH). The disordered stretch occupies residues 275 to 342 (KDVPPAAGGP…PAGVGVPPPA (68 aa)). The segment covering 281 to 296 (AGGPPQPGPHLPPLGL) has biased composition (pro residues). Composition is skewed to low complexity over residues 297 to 316 (PAPA…SSGP) and 324 to 337 (APSA…AGVG). 4 C2H2-type zinc fingers span residues 350–372 (FACP…QIIH), 378–400 (FSCS…VKTH), 407–429 (LPCG…QAAH), and 441–463 (YPCD…KAAH). A disordered region spans residues 461–503 (AAHAPPAAAAEAPKDGAASAPQPPPTFPPGPYLLPPDPPTTDS). Positions 463-480 (HAPPAAAAEAPKDGAASA) are enriched in low complexity. A compositionally biased stretch (pro residues) spans 481–499 (PQPPPTFPPGPYLLPPDPP). 5 C2H2-type zinc fingers span residues 550 to 572 (FCCG…ERIH), 578 to 600 (HQCP…HVVH), 606 to 628 (YKCE…RQVH), 669 to 691 (YACS…KEVH), and 697 to 719 (YGCD…KLVH). The segment at 726–747 (LLPPAPGGLQPPDGSSGTDAAS) is disordered. 9 C2H2-type zinc fingers span residues 792–814 (FSCA…KYVH), 820–842 (LGCG…RRSH), 848–870 (FRCP…QRCH), 876–898 (YRCG…RVVH), 904–926 (FKCG…RRLH), 932–954 (QRCS…QRLH), 960–982 (YRCE…QRAH), 989–1011 (LRCP…LAAH), and 1017–1039 (FRCS…RLAH). Residue Lys802 forms a Glycyl lysine isopeptide (Lys-Gly) (interchain with G-Cter in SUMO2) linkage. Lys1040 participates in a covalent cross-link: Glycyl lysine isopeptide (Lys-Gly) (interchain with G-Cter in SUMO2).

Belongs to the krueppel C2H2-type zinc-finger protein family.

The protein resides in the nucleus. May be involved in transcriptional regulation. The chain is Zinc finger protein 865 (ZNF865) from Homo sapiens (Human).